The chain runs to 534 residues: Beta-1,2-xylosyltransferase (534 aa).

The Cytoplasmic portion of the chain corresponds to 1-11; that stretch reads MSKRNPKILKI. Residues 12 to 34 traverse the membrane as a helical; Signal-anchor for type II membrane protein segment; sequence FLYMLLLNSLFLIIYFVFHSSSF. The Lumenal segment spans residues 35–534; sequence SPEQSQPPHI…LTEIMKSLGC (500 aa). N-linked (GlcNAc...) asparagine glycosylation is found at N51, N301, and N479.

In terms of processing, glycosylation at least at one of the two sites Asn-51 and Asn-301 is necessary for enzyme stability and activity.

It localises to the golgi apparatus membrane. The enzyme catalyses N(4)-{beta-D-GlcNAc-(1-&gt;2)-alpha-D-Man-(1-&gt;3)-[beta-D-GlcNAc-(1-&gt;2)-alpha-D-Man-(1-&gt;6)]-beta-D-Man-(1-&gt;4)-beta-D-GlcNAc-(1-&gt;4)-beta-D-GlcNAc}-L-asparaginyl-[protein] + UDP-alpha-D-xylose = N(4)-{beta-D-GlcNAc-(1-&gt;2)-alpha-D-Man-(1-&gt;3)-[beta-D-GlcNAc-(1-&gt;2)-alpha-D-Man-(1-&gt;6)]-[beta-D-Xyl-(1-&gt;2)]-beta-D-Man-(1-&gt;4)-beta-D-GlcNAc-(1-&gt;4)-beta-D-GlcNAc}-L-asparaginyl-[protein] + UDP + H(+). It functions in the pathway protein modification; protein glycosylation. Functionally, glycosyltransferase involved in the xylosylation of N-glycans. Possesses beta-1,2-xylosyltransferase activity, transferring xylose from UDP-xylose to the core beta-linked mannose of N-glycans. Involved in the biosynthesis of glycoprotein bound N-glycans. Does not require metal ions for its activity. In Arabidopsis thaliana (Mouse-ear cress), this protein is Beta-1,2-xylosyltransferase.